The sequence spans 191 residues: Leucyl/phenylalanyl-tRNA--protein transferase (191 aa).

Belongs to the L/F-transferase family.

Its subcellular location is the cytoplasm. It catalyses the reaction N-terminal L-lysyl-[protein] + L-leucyl-tRNA(Leu) = N-terminal L-leucyl-L-lysyl-[protein] + tRNA(Leu) + H(+). The catalysed reaction is N-terminal L-arginyl-[protein] + L-leucyl-tRNA(Leu) = N-terminal L-leucyl-L-arginyl-[protein] + tRNA(Leu) + H(+). It carries out the reaction L-phenylalanyl-tRNA(Phe) + an N-terminal L-alpha-aminoacyl-[protein] = an N-terminal L-phenylalanyl-L-alpha-aminoacyl-[protein] + tRNA(Phe). Functionally, functions in the N-end rule pathway of protein degradation where it conjugates Leu, Phe and, less efficiently, Met from aminoacyl-tRNAs to the N-termini of proteins containing an N-terminal arginine or lysine. The sequence is that of Leucyl/phenylalanyl-tRNA--protein transferase from Nostoc sp. (strain PCC 7120 / SAG 25.82 / UTEX 2576).